Consider the following 204-residue polypeptide: Guanylate kinase (204 aa).

The 179-residue stretch at 3–181 (GTLYIVSAAS…AVSEMSAIFT (179 aa)) folds into the Guanylate kinase-like domain. 10–17 (AASGTGKS) is an ATP binding site.

This sequence belongs to the guanylate kinase family.

It localises to the cytoplasm. The catalysed reaction is GMP + ATP = GDP + ADP. Functionally, essential for recycling GMP and indirectly, cGMP. This Xylella fastidiosa (strain 9a5c) protein is Guanylate kinase (gmk).